We begin with the raw amino-acid sequence, 687 residues long: Dictomallein (687 aa).

Disordered regions lie at residues 1–45 (MGNG…SRRL) and 73–112 (TAGGAAPLTPAVASPAGPTGSTPGSTPGATTAPAPSSTSA). Residues 233–501 (PVFGTDADVQ…QAWIASRVLA (269 aa)) form the Peptidase M66 domain. Histidine 393 contributes to the Zn(2+) binding site. The active site involves glutamate 394. The Zn(2+) site is built by histidine 397 and histidine 403.

The protein belongs to the dictomallein family. Requires Zn(2+) as cofactor.

The sequence is that of Dictomallein (dtmL) from Burkholderia pseudomallei (strain 1710b).